The sequence spans 314 residues: Inactive chitinase-like protein 1 (314 aa).

Residues 1–19 (MKEIVRALEGYGPPKDKAA) form the signal peptide. The 41-residue stretch at 20-60 (EQCGWQAGGALCPGGLCCSQYGWCANTPEYCGSGCQSQCDG) folds into the Chitin-binding type-1 domain. Disulfide bonds link cysteine 22/cysteine 37, cysteine 31/cysteine 43, cysteine 36/cysteine 50, cysteine 54/cysteine 58, cysteine 92/cysteine 154, cysteine 166/cysteine 174, and cysteine 273/cysteine 305.

This sequence belongs to the glycosyl hydrolase 19 family. Chitinase class I subfamily.

Its function is as follows. Inactive chitinase-like protein that does not exhibit hydrolytic activity toward chitin. Binds strongly to chitin and possesses antifungal activity toward the fungal pathogen Altenaria alternata in plate assays. Inhibits the growth of Fusarium oxysporum on plate assays. Probably involved in defense against fungal pathogens through a mechanism that only involves carbohydrate binding. In Hevea brasiliensis (Para rubber tree), this protein is Inactive chitinase-like protein 1.